A 963-amino-acid polypeptide reads, in one-letter code: Copalyl diphosphate synthase (963 aa).

Positions 1–539 are type II terpene cyclase (TC); the sequence is MSPMDLQESA…EAYILAALKR (539 aa). A substrate binding region spans residues 227–292; it reads ATQWDDECED…FIEKIRSYLH (66 aa). The Mg(2+) site is built by aspartate 311 and aspartate 314. The short motif at 311 to 314 is the DXDD element; that stretch reads DADD. Residues 333–341 carry the NSE/DTE motif; it reads AMLKEFEEE. Substrate is bound by residues 337–341 and 521–522; these read EFEEE and VT. A linker region spans residues 540-659; the sequence is AADLPDENAE…SVSVHTDHSD (120 aa). Residues 627–648 show a composition bias toward polar residues; it reads TNGHYVNGTNHETPLTNGISNG. Residues 627-657 form a disordered region; sequence TNGHYVNGTNHETPLTNGISNGDSVSVHTDH. The tract at residues 660 to 963 is geranylfarnesyl diphosphate synthase (PT); that stretch reads SYYQRSDWTA…KILARMSLEL (304 aa). Isopentenyl diphosphate is bound by residues lysine 688, arginine 691, and histidine 720. Residues aspartate 727 and aspartate 731 each coordinate Mg(2+). The DDXXD 1 signature appears at 727-731; it reads DDIQD. Arginine 736 lines the dimethylallyl diphosphate pocket. Isopentenyl diphosphate is bound at residue arginine 737. Lysine 814, threonine 815, glutamine 848, asparagine 855, lysine 865, and lysine 875 together coordinate dimethylallyl diphosphate. The short motif at 851 to 855 is the DDXXD 2 element; it reads DDYLN.

It in the N-terminal section; belongs to the terpene synthase family. This sequence in the C-terminal section; belongs to the FPP/GGPP synthase family. In terms of assembly, homohexamer. It depends on Mg(2+) as a cofactor.

The enzyme catalyses isopentenyl diphosphate + (2E,6E)-farnesyl diphosphate = (2E,6E,10E)-geranylgeranyl diphosphate + diphosphate. The catalysed reaction is (2E,6E,10E)-geranylgeranyl diphosphate = (+)-copalyl diphosphate. Bifunctional terpene synthase that possesses both prenyltransferase and type II terpene cyclase activity, converting isopentenyl diphosphate (IPP) and dimethylallyl diphosphate (DMAPP) into geranylgeranyl diphosphate (GGPP) and further converting GGPP into copalyl diphosphate, respectively. The sequence is that of Copalyl diphosphate synthase from Talaromyces verruculosus (Penicillium verruculosum).